Here is a 1422-residue protein sequence, read N- to C-terminus: MYFLSGWPKRLLCAPRSPAEAPLHVQSDPRRAFFAVLAPARLSIWYSRPSVLIVTYKEPAKSSTQFGSYKQAEWRPDSTMIAVSTANGYILFFHITSSRGDKYLYEPVYPKGSPQMKGIPHFKEEHCAPALNLEMKKILDLQAPIMSLQSVLEDLLVATSDGLLHLIHWEGMTNGRKAINLSTVPFSVDLQSSRVGSFLGFADVHIKDMEYCATLDGFAVVFNDGKVGFITPVSSRFTAEQLHGVWPQDVIDGTCVAVNNKYRLMAFGCASGCVQVYTIDNTTGAMLLSHKLELTAKQYPDIWNKTGAVKLIRWSPDNSAVIVTWEYGGLSLWSVFGAQLICTLGGDFAYRSDGTKKDPLKINSMSWGAEGYHLWVISGLGSQHTQIETDLRSTVKEPSILLFQFIKSVLTVNPCMSNQEQVLLQGEDRLYLNCGEASQAQNPKYSSARAERMPRHEKSPFADGGLEAPGLSTLLGHRHWHVVQISSTYLESNWPIRFSAIDKLGQNIAVAGKFGFAHYSLLTKKWKLFGNITQEQNMIVTGGLAWWDDFMVLACYNLSDCQEELRIYLRTSNLDNAFAHVTKAPMETLLLSVFRDMVVVFRADCSICLYSIERKSDGSNTTASVQVLQEVSMSRYIPHPFLVVSVTLTSVSTENGISLKMPQQARDAESIMLNLAGQLIMMQRDRSGPQIREKDSHPNQRKLLPFCPPVVLAQSVENVWTTCRANKQKRHLLEALWLSCGGAGMKVWLPLFPRDHRKPHSFLSQRIMLPFHINIYPLAVLFEDALVLGAVNDTLLYDSLYTRSSAREQLEVLFPFCVVERTSQIYLHHILRQLLVRNLGEQALLLAQSCAALPYFPHVLELMLHEVLEEEATSREPIPDPLLPTVAKFITEFPLFLQTVVHCARKTEYALWNYLFAAVGNPKDLFEECLMAQDLDTAASYLIILQNMEVPAVSRQHATLLFNTALEQGKWDLCRHMIRFLKAIGSGESETPPSTPTSQEPSSSGGFEFFRNRSISLSQSAENVPPGKFGLQKTLSMPTGPSGKRWSKDSECAENMYIDMMLWRHARRLLEEVRLKDLGCFAAQLGFELISWLCKERTRAARVDNFVVALKRLHKDFLWPLPIIPASSISSPFKNGKCRAVGEQMLKSQSADPFITPEMDAGISNIQRSQSWLSNIGPTHRDTDRASSPGPQMQDAFLSPLSNKGDECSIGSATDLTESSSVVDGDWTMVDENFSTLSLTQSELEHISMELASKGPHKSQVQLRYLLHIFMEAGCLDWCVVIGLILRESSVVSQLLGIAQSSEMDGEMLQNIKSGLQAVDRWASTDCPGYKPFLNIIKPQLQKLSEITEELVQPDTFQPVTVGKTPEQTSPRAEENRGSCSHGSISQSEPGSNNVVSRKEEDTTQADEEEPLQDGAYDCSVS.

WD repeat units lie at residues 64–103 (TQFG…GDKY) and 304–343 (NKTG…LICT). Disordered stretches follow at residues 442-462 (NPKY…SPFA) and 986-1005 (SGES…SSSG). Over residues 449–460 (RAERMPRHEKSP) the composition is skewed to basic and acidic residues. A phosphothreonine mark is found at Thr991 and Thr995. A phosphoserine mark is found at Ser1014, Ser1016, Ser1018, Ser1036, and Ser1171. The interval 1021-1048 (AENVPPGKFGLQKTLSMPTGPSGKRWSK) is disordered. 2 disordered regions span residues 1179–1198 (THRD…DAFL) and 1355–1422 (DTFQ…CSVS). The span at 1378–1396 (GSCSHGSISQSEPGSNNVV) shows a compositional bias: polar residues. Over residues 1403–1412 (TTQADEEEPL) the composition is skewed to acidic residues.

The protein belongs to the RIC1 family. As to quaternary structure, forms a complex with RGP1; the interaction enhances RAB6A GTPase activity. Interacts (via central domain) with RGP1. Interacts with RAB6A; the interaction is direct with a preference for RAB6A-GDP. Interacts (via C-terminus domain) with RAB33B; the interaction is direct with a preference for RAB33B-GTP. Interacts with GJA1. As to expression, expressed in the eye lens.

It is found in the cytoplasm. The protein resides in the cytosol. The protein localises to the membrane. In terms of biological role, the RIC1-RGP1 complex acts as a guanine nucleotide exchange factor (GEF), which activates RAB6A by exchanging bound GDP for free GTP, and may thereby be required for efficient fusion of endosome-derived vesicles with the Golgi compartment. The RIC1-RGP1 complex participates in the recycling of mannose-6-phosphate receptors. Required for phosphorylation and localization of GJA1. Is a regulator of procollagen transport and secretion, and is required for correct cartilage morphogenesis and development of the craniofacial skeleton. In Mus musculus (Mouse), this protein is Guanine nucleotide exchange factor subunit RIC1.